A 283-amino-acid polypeptide reads, in one-letter code: Bifunctional protein FolD (283 aa).

NADP(+) is bound by residues 165 to 167 (GRS), Ser190, and Ile231.

The protein belongs to the tetrahydrofolate dehydrogenase/cyclohydrolase family. As to quaternary structure, homodimer.

It catalyses the reaction (6R)-5,10-methylene-5,6,7,8-tetrahydrofolate + NADP(+) = (6R)-5,10-methenyltetrahydrofolate + NADPH. It carries out the reaction (6R)-5,10-methenyltetrahydrofolate + H2O = (6R)-10-formyltetrahydrofolate + H(+). The protein operates within one-carbon metabolism; tetrahydrofolate interconversion. Its function is as follows. Catalyzes the oxidation of 5,10-methylenetetrahydrofolate to 5,10-methenyltetrahydrofolate and then the hydrolysis of 5,10-methenyltetrahydrofolate to 10-formyltetrahydrofolate. This chain is Bifunctional protein FolD, found in Janthinobacterium sp. (strain Marseille) (Minibacterium massiliensis).